We begin with the raw amino-acid sequence, 240 residues long: Ribonuclease PH (240 aa).

Phosphate contacts are provided by residues Arg87 and 125 to 127 (GTR).

It belongs to the RNase PH family. In terms of assembly, homohexameric ring arranged as a trimer of dimers.

The catalysed reaction is tRNA(n+1) + phosphate = tRNA(n) + a ribonucleoside 5'-diphosphate. Functionally, phosphorolytic 3'-5' exoribonuclease that plays an important role in tRNA 3'-end maturation. Removes nucleotide residues following the 3'-CCA terminus of tRNAs; can also add nucleotides to the ends of RNA molecules by using nucleoside diphosphates as substrates, but this may not be physiologically important. Probably plays a role in initiation of 16S rRNA degradation (leading to ribosome degradation) during starvation. The sequence is that of Ribonuclease PH from Pseudomonas fluorescens (strain Pf0-1).